A 138-amino-acid chain; its full sequence is Small ribosomal subunit protein bS18m (138 aa).

The protein belongs to the bacterial ribosomal protein bS18 family. In terms of assembly, component of the mitochondrial small ribosomal subunit. Mature mitochondrial ribosomes consist of a small (37S) and a large (54S) subunit. The 37S subunit contains at least 33 different proteins and 1 molecule of RNA (15S). The 54S subunit contains at least 45 different proteins and 1 molecule of RNA (21S).

The protein localises to the mitochondrion. This Saccharomyces cerevisiae (strain RM11-1a) (Baker's yeast) protein is Small ribosomal subunit protein bS18m (RSM18).